The following is a 530-amino-acid chain: ATP synthase subunit alpha (530 aa).

ATP is bound at residue 169–176 (GDRQTGKT).

The protein belongs to the ATPase alpha/beta chains family. As to quaternary structure, F-type ATPases have 2 components, CF(1) - the catalytic core - and CF(0) - the membrane proton channel. CF(1) has five subunits: alpha(3), beta(3), gamma(1), delta(1), epsilon(1). CF(0) has three main subunits: a(1), b(2) and c(9-12). The alpha and beta chains form an alternating ring which encloses part of the gamma chain. CF(1) is attached to CF(0) by a central stalk formed by the gamma and epsilon chains, while a peripheral stalk is formed by the delta and b chains.

The protein resides in the cell membrane. It catalyses the reaction ATP + H2O + 4 H(+)(in) = ADP + phosphate + 5 H(+)(out). Produces ATP from ADP in the presence of a proton gradient across the membrane. The alpha chain is a regulatory subunit. This is ATP synthase subunit alpha from Mycoplasmopsis synoviae (strain 53) (Mycoplasma synoviae).